The primary structure comprises 177 residues: NAD(P)H-quinone oxidoreductase subunit 6, chloroplastic (177 aa).

The next 5 membrane-spanning stretches (helical) occupy residues Ile10–Thr30, Ile33–Leu53, Ala61–Met81, Leu92–Ile112, and Phe152–Ser172.

This sequence belongs to the complex I subunit 6 family. In terms of assembly, NDH is composed of at least 16 different subunits, 5 of which are encoded in the nucleus.

Its subcellular location is the plastid. It localises to the chloroplast thylakoid membrane. The catalysed reaction is a plastoquinone + NADH + (n+1) H(+)(in) = a plastoquinol + NAD(+) + n H(+)(out). The enzyme catalyses a plastoquinone + NADPH + (n+1) H(+)(in) = a plastoquinol + NADP(+) + n H(+)(out). In terms of biological role, NDH shuttles electrons from NAD(P)H:plastoquinone, via FMN and iron-sulfur (Fe-S) centers, to quinones in the photosynthetic chain and possibly in a chloroplast respiratory chain. The immediate electron acceptor for the enzyme in this species is believed to be plastoquinone. Couples the redox reaction to proton translocation, and thus conserves the redox energy in a proton gradient. This is NAD(P)H-quinone oxidoreductase subunit 6, chloroplastic (ndhG) from Lemna minor (Common duckweed).